The following is a 170-amino-acid chain: Adenine phosphoribosyltransferase (170 aa).

The protein belongs to the purine/pyrimidine phosphoribosyltransferase family. As to quaternary structure, homodimer.

The protein localises to the cytoplasm. The catalysed reaction is AMP + diphosphate = 5-phospho-alpha-D-ribose 1-diphosphate + adenine. The protein operates within purine metabolism; AMP biosynthesis via salvage pathway; AMP from adenine: step 1/1. Its function is as follows. Catalyzes a salvage reaction resulting in the formation of AMP, that is energically less costly than de novo synthesis. This is Adenine phosphoribosyltransferase from Prochlorococcus marinus (strain AS9601).